A 145-amino-acid polypeptide reads, in one-letter code: Small ribosomal subunit protein eS19 (145 aa).

Residues 120 to 145 form a disordered region; it reads GGRRISENGQRDLDRIAAQTLEEDDE. Positions 123–134 are enriched in basic and acidic residues; the sequence is RISENGQRDLDR.

Belongs to the eukaryotic ribosomal protein eS19 family. As to quaternary structure, component of the small ribosomal subunit. Mature ribosomes consist of a small (40S) and a large (60S) subunit. The 40S subunit contains about 32 different proteins and 1 molecule of RNA (18S). The 60S subunit contains 45 different proteins and 3 molecules of RNA (25S, 5.8S and 5S).

It localises to the cytoplasm. Functionally, component of the ribosome, a large ribonucleoprotein complex responsible for the synthesis of proteins in the cell. The small ribosomal subunit (SSU) binds messenger RNAs (mRNAs) and translates the encoded message by selecting cognate aminoacyl-transfer RNA (tRNA) molecules. The large subunit (LSU) contains the ribosomal catalytic site termed the peptidyl transferase center (PTC), which catalyzes the formation of peptide bonds, thereby polymerizing the amino acids delivered by tRNAs into a polypeptide chain. The nascent polypeptides leave the ribosome through a tunnel in the LSU and interact with protein factors that function in enzymatic processing, targeting, and the membrane insertion of nascent chains at the exit of the ribosomal tunnel. RPS19A is required for proper maturation of the small (40S) ribosomal subunit. The protein is Small ribosomal subunit protein eS19 (RPS19A) of Candida albicans (strain SC5314 / ATCC MYA-2876) (Yeast).